A 23-amino-acid polypeptide reads, in one-letter code: Conotoxin as25a (23 aa).

P4 carries the post-translational modification 4-hydroxyproline; partial. P23 is modified (4-hydroxyproline; partial; alternate). Residue P23 is modified to Proline amide; alternate.

The name as25b given in PubMed:23474143 corresponds to the hydroxylated peptide. The amidation of the C-terminus of this hydroxylated peptide is not directly confirmed. Post-translationally, contains 3 disulfide bonds. In terms of tissue distribution, expressed by the venom duct.

The protein localises to the secreted. Its function is as follows. Upon intracranial injection in mice, as25a (the toxin without the two 4-hydroxyprolines) provokes paralysis of the hind limbs and death with a dose of 240 pmol. This Conus cancellatus (Cancellate cone) protein is Conotoxin as25a.